The chain runs to 240 residues: Tetrahydromethanopterin S-methyltransferase subunit A (240 aa).

Topologically, residues 1–216 are cytoplasmic; sequence MADKKAPASG…DAALIAKFNS (216 aa). His-85 serves as a coordination point for 5-hydroxybenzimidazolylcob(I)amide. A helical transmembrane segment spans residues 217–234; sequence GYYNGKIQGIAIGLFLSL. The Extracellular segment spans residues 235-240; it reads LIFSLL.

The protein belongs to the MtrA family. The complex is composed of 8 subunits; MtrA, MtrB, MtrC, MtrD, MtrE, MtrF, MtrG and MtrH. The cofactor is 5-hydroxybenzimidazolylcob(I)amide.

It localises to the cell membrane. The catalysed reaction is 5-methyl-5,6,7,8-tetrahydromethanopterin + coenzyme M + 2 Na(+)(in) = 5,6,7,8-tetrahydromethanopterin + methyl-coenzyme M + 2 Na(+)(out). Its pathway is one-carbon metabolism; methanogenesis from CO(2); methyl-coenzyme M from 5,10-methylene-5,6,7,8-tetrahydromethanopterin: step 2/2. Part of a complex that catalyzes the formation of methyl-coenzyme M and tetrahydromethanopterin from coenzyme M and methyl-tetrahydromethanopterin. This is an energy-conserving, sodium-ion translocating step. The chain is Tetrahydromethanopterin S-methyltransferase subunit A from Methanococcus aeolicus (strain ATCC BAA-1280 / DSM 17508 / OCM 812 / Nankai-3).